Here is a 296-residue protein sequence, read N- to C-terminus: 5,10-methylenetetrahydrofolate reductase (296 aa).

Residue E28 is the Proton donor/acceptor of the active site. T59 provides a ligand contact to NADH. FAD-binding residues include Y60, A62, H88, R118, G119, D120, A132, Y152, H156, A159, D165, N168, R171, and K172. Residue D120 coordinates (6S)-5-methyl-5,6,7,8-tetrahydrofolate. Q183 is an NADH binding site. Residues Q183, Q219, and R279 each contribute to the (6S)-5-methyl-5,6,7,8-tetrahydrofolate site.

Belongs to the methylenetetrahydrofolate reductase family. As to quaternary structure, homotetramer. Requires FAD as cofactor.

The enzyme catalyses (6S)-5-methyl-5,6,7,8-tetrahydrofolate + NAD(+) = (6R)-5,10-methylene-5,6,7,8-tetrahydrofolate + NADH + H(+). Its pathway is one-carbon metabolism; tetrahydrofolate interconversion. The protein operates within amino-acid biosynthesis; L-methionine biosynthesis via de novo pathway. Functionally, catalyzes the NADH-dependent reduction of 5,10-methylenetetrahydrofolate to 5-methyltetrahydrofolate. Is required to provide the methyl group necessary for methionine synthetase to convert homocysteine to methionine; the methyl group is given by 5-methyltetrahydrofolate. Can also use NADPH as the reductant, but much less effectively than NADH. The protein is 5,10-methylenetetrahydrofolate reductase of Escherichia coli (strain K12).